A 404-amino-acid polypeptide reads, in one-letter code: Serine/threonine transporter SstT (404 aa).

Helical transmembrane passes span 17 to 37 (IGIG…LTGF), 39 to 59 (ILGK…VFAL), 75 to 95 (MTLI…VAVL), 138 to 158 (ALAT…GLAL), 179 to 199 (IVVW…FTTI), 212 to 232 (FLIL…NPLI), 287 to 307 (IPLG…VLTL), and 313 to 333 (FGIP…AVSA).

This sequence belongs to the dicarboxylate/amino acid:cation symporter (DAACS) (TC 2.A.23) family.

It is found in the cell membrane. It carries out the reaction L-serine(in) + Na(+)(in) = L-serine(out) + Na(+)(out). The catalysed reaction is L-threonine(in) + Na(+)(in) = L-threonine(out) + Na(+)(out). Functionally, involved in the import of serine and threonine into the cell, with the concomitant import of sodium (symport system). This is Serine/threonine transporter SstT from Streptococcus pyogenes serotype M5 (strain Manfredo).